The chain runs to 128 residues: Global transcriptional regulator Spx 1 (128 aa).

An intrachain disulfide couples Cys-10 to Cys-13.

It belongs to the ArsC family. Spx subfamily. In terms of assembly, interacts with the C-terminal domain of the alpha subunit of the RNAP.

It is found in the cytoplasm. Its function is as follows. Global transcriptional regulator that plays a key role in stress response and exerts either positive or negative regulation of genes. Acts by interacting with the C-terminal domain of the alpha subunit of the RNA polymerase (RNAP). This interaction can enhance binding of RNAP to the promoter region of target genes and stimulate their transcription, or block interaction of RNAP with activator. The sequence is that of Global transcriptional regulator Spx 1 from Lactococcus lactis subsp. lactis (strain IL1403) (Streptococcus lactis).